Reading from the N-terminus, the 136-residue chain is Large ribosomal subunit protein uL16 (136 aa).

It belongs to the universal ribosomal protein uL16 family. In terms of assembly, part of the 50S ribosomal subunit.

In terms of biological role, binds 23S rRNA and is also seen to make contacts with the A and possibly P site tRNAs. The polypeptide is Large ribosomal subunit protein uL16 (Vibrio atlanticus (strain LGP32) (Vibrio splendidus (strain Mel32))).